We begin with the raw amino-acid sequence, 794 residues long: Ent-copalyl diphosphate synthase 2 (794 aa).

The N-terminal 35 residues, 1 to 35 (MSSSSNVTSLPRLTTAGGVFPREMVRVHSSCNILR), are a transit peptide targeting the chloroplast. Lysine 238 provides a ligand contact to substrate. Mg(2+)-binding residues include aspartate 369 and aspartate 371. Residues 369-372 (DVDD) carry the DXDD motif motif. Residue lysine 455 participates in substrate binding.

It belongs to the terpene synthase family. Tpsc subfamily. Mg(2+) serves as cofactor. In terms of tissue distribution, expressed in leaves.

Its subcellular location is the plastid. The protein resides in the chloroplast. The catalysed reaction is (2E,6E,10E)-geranylgeranyl diphosphate = ent-copalyl diphosphate. It participates in secondary metabolite biosynthesis; terpenoid biosynthesis. Its function is as follows. Involved in the biosynthesis of ent-kaurene diterpenoids natural products such as oridonin, miltiradiene, eriocalyxin B and nezukol, known to exhibit antitumor, anti-inflammatory and antibacterial activities. Catalyzes the conversion of (2E,6E,10E)-geranylgeranyl diphosphate (GGPP) to ent-copalyl diphosphate (ent-CPP). The polypeptide is Ent-copalyl diphosphate synthase 2 (Isodon eriocalyx (Plectranthus eriocalyx)).